A 513-amino-acid polypeptide reads, in one-letter code: Putative ATP-dependent RNA helicase QP509L (513 aa).

Residues 110-262 enclose the Helicase ATP-binding domain; that stretch reads KKLLSPYGRF…KIIIHHLGQP (153 aa). 123 to 130 is a binding site for ATP; that stretch reads LNTGLGKT. The DEAH box motif lies at 215–218; the sequence is DEAH.

The protein belongs to the DEAD box helicase family. DEAH subfamily.

It catalyses the reaction ATP + H2O = ADP + phosphate + H(+). This chain is Putative ATP-dependent RNA helicase QP509L, found in African swine fever virus (isolate Tick/South Africa/Pretoriuskop Pr4/1996) (ASFV).